We begin with the raw amino-acid sequence, 199 residues long: Heparin-binding hemagglutinin (199 aa).

A compositionally biased stretch (low complexity) spans 162 to 180 (KAAPAKKAAPAKKAAPAKK). The tract at residues 162 to 199 (KAAPAKKAAPAKKAAPAKKAAAKKAPAKKAAAKKVTQK) is disordered. A compositionally biased stretch (basic residues) spans 181 to 199 (AAAKKAPAKKAAAKKVTQK).

To M.leprae HbhA. In terms of processing, glycosylated. Glycosylation may protect the protein from proteolytic degradation and be important for hemagglutination. It suggests that the carbohydrate moiety may be located within the C-terminal domain of HbhA.

Its subcellular location is the cell surface. Its function is as follows. Required for extrapulmonary dissemination. Mediates adherence to epithelial cells by binding to sulfated glycoconjugates present at the surface of these cells. The sequence is that of Heparin-binding hemagglutinin (hbhA) from Mycobacterium tuberculosis (strain CDC 1551 / Oshkosh).